A 249-amino-acid polypeptide reads, in one-letter code: 2-C-methyl-D-erythritol 4-phosphate cytidylyltransferase (249 aa).

The protein belongs to the IspD/TarI cytidylyltransferase family. IspD subfamily.

The catalysed reaction is 2-C-methyl-D-erythritol 4-phosphate + CTP + H(+) = 4-CDP-2-C-methyl-D-erythritol + diphosphate. It participates in isoprenoid biosynthesis; isopentenyl diphosphate biosynthesis via DXP pathway; isopentenyl diphosphate from 1-deoxy-D-xylulose 5-phosphate: step 2/6. In terms of biological role, catalyzes the formation of 4-diphosphocytidyl-2-C-methyl-D-erythritol from CTP and 2-C-methyl-D-erythritol 4-phosphate (MEP). The sequence is that of 2-C-methyl-D-erythritol 4-phosphate cytidylyltransferase from Thermobifida fusca (strain YX).